Consider the following 142-residue polypeptide: Small ribosomal subunit protein uS12y (142 aa).

Pro-61 carries the post-translational modification Hydroxyproline.

Belongs to the universal ribosomal protein uS12 family.

This chain is Small ribosomal subunit protein uS12y (RPS23B), found in Arabidopsis thaliana (Mouse-ear cress).